The primary structure comprises 194 residues: dCTP deaminase (194 aa).

DCTP is bound by residues 110–115, Asp-128, 136–138, Tyr-171, Lys-178, and Gln-182; these read RSSLAR and VLE. Catalysis depends on Glu-138, which acts as the Proton donor/acceptor.

This sequence belongs to the dCTP deaminase family. In terms of assembly, homotrimer.

The enzyme catalyses dCTP + H2O + H(+) = dUTP + NH4(+). It functions in the pathway pyrimidine metabolism; dUMP biosynthesis; dUMP from dCTP (dUTP route): step 1/2. Functionally, catalyzes the deamination of dCTP to dUTP. This chain is dCTP deaminase, found in Histophilus somni (strain 2336) (Haemophilus somnus).